A 204-amino-acid polypeptide reads, in one-letter code: Large ribosomal subunit protein uL4 (204 aa).

Residues 44-76 (KRQGTQSAKTRSEVRGGGIKPWRQKGTGRARQG) form a disordered region.

Belongs to the universal ribosomal protein uL4 family. Part of the 50S ribosomal subunit.

One of the primary rRNA binding proteins, this protein initially binds near the 5'-end of the 23S rRNA. It is important during the early stages of 50S assembly. It makes multiple contacts with different domains of the 23S rRNA in the assembled 50S subunit and ribosome. Its function is as follows. Forms part of the polypeptide exit tunnel. The protein is Large ribosomal subunit protein uL4 of Clostridium perfringens (strain ATCC 13124 / DSM 756 / JCM 1290 / NCIMB 6125 / NCTC 8237 / Type A).